We begin with the raw amino-acid sequence, 538 residues long: Transmembrane protein 266 (538 aa).

Over 1–102 (MALVTSFNMA…VFLLSASLNS (102 aa)) the chain is Cytoplasmic. Residues 103 to 123 (FLVACVILVVILLTLELLIDT) form a helical membrane-spanning segment. The Extracellular portion of the chain corresponds to 124-130 (KLLQFSN). Residues 131–151 (AFQFAGVIHWISLVILSVFFS) form a helical membrane-spanning segment. Over 152–169 (ETVLRIVVLGIWDYIENK) the chain is Cytoplasmic. The helical transmembrane segment at 170-190 (IEVFDGAVIILSLAPMVASTV) threads the bilayer. Topologically, residues 191 to 199 (ANGPRSPWD) are extracellular. Residues 200 to 220 (AISLIIMFRIWRVKRVIDAYV) traverse the membrane as a helical segment. The Cytoplasmic portion of the chain corresponds to 221–538 (LPVKLEMEMV…EPKLHTVPEA (318 aa)). Residues 232–278 (QQYEKAKAIQDEQLERLTQICQEQGFEIRQLRAHLAQQDLDLAAERE) are a coiled coil. Disordered stretches follow at residues 380–435 (NSTC…PLPL) and 453–483 (SSLS…VQTS). The segment covering 381 to 396 (STCASATSETTSHSTC) has biased composition (low complexity). A compositionally biased stretch (polar residues) spans 397-417 (GSVTRAQSASSQTLGSSTDCS). Low complexity predominate over residues 425 to 434 (PSKPRSSPLP).

Homodimer; disulfide-linked. In brain, present in the granule layer of the cerebellar cortex. Localizes on the post-synaptic side of glutamatergic mossy fibers and granule cells in the cerebellum (at protein level). As to expression, predominantly expressed in granule cells in cerebellum (at protein level).

The protein localises to the cell projection. It is found in the dendrite. The protein resides in the perikaryon. Its subcellular location is the cell membrane. Its function is as follows. Voltage-sensor protein present on the post-synaptic side of glutamatergic mossy fibers and granule cells in the cerebellum. Despite the presence of a voltage-sensor segment, does not form a functional ion channel and its precise role remains unclear. Undergoes both rapid and slow structural rearrangements in response to changes in voltage. Contains a zinc-binding site that can regulate the slow conformational transition. This Mus musculus (Mouse) protein is Transmembrane protein 266.